The chain runs to 417 residues: Phosphoglycerate kinase (417 aa).

(2R)-3-phosphoglycerate contacts are provided by valine 23, aspartate 24, phenylalanine 25, asparagine 26, glutamine 39, arginine 40, serine 63, histidine 64, glycine 66, arginine 67, leucine 122, arginine 123, histidine 170, and arginine 171. Glycine 214 contributes to the ADP binding site. Glycine 214 serves as a coordination point for CDP. AMP-binding residues include alanine 215 and lysine 216. Residue alanine 215 coordinates ATP. Alanine 215 lines the Mg(2+) pocket. A CDP-binding site is contributed by aspartate 219. Aspartate 219 serves as a coordination point for Mg(2+). Lysine 220 is a binding site for AMP. Lysine 220 is a binding site for ATP. ADP is bound at residue glycine 238. Glycine 238 is a binding site for CDP. Residues glycine 239 and glycine 313 each coordinate AMP. ATP-binding residues include glycine 239 and glycine 313. 3 residues coordinate CDP: glycine 338, alanine 340, and phenylalanine 343. Phenylalanine 343 is an ADP binding site. Glutamate 344 serves as a coordination point for AMP. 3 residues coordinate ATP: glutamate 344, aspartate 375, and threonine 376. Position 375 (aspartate 375) interacts with Mg(2+).

This sequence belongs to the phosphoglycerate kinase family. As to quaternary structure, monomer. Mg(2+) is required as a cofactor.

The protein localises to the cytoplasm. Its subcellular location is the mitochondrion. The enzyme catalyses (2R)-3-phosphoglycerate + ATP = (2R)-3-phospho-glyceroyl phosphate + ADP. It participates in carbohydrate degradation; glycolysis; pyruvate from D-glyceraldehyde 3-phosphate: step 2/5. Catalyzes one of the two ATP producing reactions in the glycolytic pathway via the reversible conversion of 1,3-diphosphoglycerate to 3-phosphoglycerate. Both L- and D- forms of purine and pyrimidine nucleotides can be used as substrates, but the activity is much lower on pyrimidines. Negatively regulates the biosynthesis of acetyl-CoA from pyruvate in the mitochondrion. This is Phosphoglycerate kinase (pgk1) from Hypocrea rufa (Trichoderma viride).